The sequence spans 277 residues: Phosphatidylglycerol--prolipoprotein diacylglyceryl transferase (277 aa).

The next 4 membrane-spanning stretches (helical) occupy residues 18-38 (ISVK…LLLA), 51-71 (IIVD…RIYY), 89-109 (IWHG…TAVI), and 116-136 (ISFW…QAIG). Arg-137 serves as a coordination point for a 1,2-diacyl-sn-glycero-3-phospho-(1'-sn-glycerol). 3 consecutive transmembrane segments (helical) span residues 177 to 197 (QPTF…LLII), 205 to 225 (GELF…IEGM), and 235 to 255 (FRVS…LIIY).

This sequence belongs to the Lgt family.

Its subcellular location is the cell membrane. The catalysed reaction is L-cysteinyl-[prolipoprotein] + a 1,2-diacyl-sn-glycero-3-phospho-(1'-sn-glycerol) = an S-1,2-diacyl-sn-glyceryl-L-cysteinyl-[prolipoprotein] + sn-glycerol 1-phosphate + H(+). The protein operates within protein modification; lipoprotein biosynthesis (diacylglyceryl transfer). In terms of biological role, catalyzes the transfer of the diacylglyceryl group from phosphatidylglycerol to the sulfhydryl group of the N-terminal cysteine of a prolipoprotein, the first step in the formation of mature lipoproteins. The polypeptide is Phosphatidylglycerol--prolipoprotein diacylglyceryl transferase (Listeria innocua serovar 6a (strain ATCC BAA-680 / CLIP 11262)).